A 122-amino-acid chain; its full sequence is Large ribosomal subunit protein uL14 (122 aa).

The protein belongs to the universal ribosomal protein uL14 family. As to quaternary structure, part of the 50S ribosomal subunit. Forms a cluster with proteins L3 and L19. In the 70S ribosome, L14 and L19 interact and together make contacts with the 16S rRNA in bridges B5 and B8.

In terms of biological role, binds to 23S rRNA. Forms part of two intersubunit bridges in the 70S ribosome. This chain is Large ribosomal subunit protein uL14, found in Mycolicibacterium smegmatis (strain ATCC 700084 / mc(2)155) (Mycobacterium smegmatis).